The chain runs to 250 residues: MTDDSNKTTHFGFETVPEGEKAGRVQGVFSSVASKYDIMNDVMSVGIHRLWKEAMMDWLAPRAGQKLLDVAGGTGDISFRFLKRAGYGHATVLDLTESMLVEGRKRAEAAAMADQLDWVTGDAMALPFADNTFDVYTISFGIRNVTRPQEALNEAFRVLRPGGRLMVLEFSQLPNPAMQKAYDLYSFNVIPRMGQAIAGDRDSYQYLVESIRKFPDQDTFLKMVRDAGFENAKFRNLSMGIACLHSGWKL.

S-adenosyl-L-methionine is bound by residues Thr74, Asp94, 122–123, and Ser139; that span reads DA.

Belongs to the class I-like SAM-binding methyltransferase superfamily. MenG/UbiE family.

It catalyses the reaction a 2-demethylmenaquinol + S-adenosyl-L-methionine = a menaquinol + S-adenosyl-L-homocysteine + H(+). The enzyme catalyses a 2-methoxy-6-(all-trans-polyprenyl)benzene-1,4-diol + S-adenosyl-L-methionine = a 5-methoxy-2-methyl-3-(all-trans-polyprenyl)benzene-1,4-diol + S-adenosyl-L-homocysteine + H(+). It functions in the pathway quinol/quinone metabolism; menaquinone biosynthesis; menaquinol from 1,4-dihydroxy-2-naphthoate: step 2/2. The protein operates within cofactor biosynthesis; ubiquinone biosynthesis. In terms of biological role, methyltransferase required for the conversion of demethylmenaquinol (DMKH2) to menaquinol (MKH2) and the conversion of 2-polyprenyl-6-methoxy-1,4-benzoquinol (DDMQH2) to 2-polyprenyl-3-methyl-6-methoxy-1,4-benzoquinol (DMQH2). The sequence is that of Ubiquinone/menaquinone biosynthesis C-methyltransferase UbiE from Roseobacter denitrificans (strain ATCC 33942 / OCh 114) (Erythrobacter sp. (strain OCh 114)).